The chain runs to 937 residues: MATPSMMPQWAYMHIAGQDASEYLSPGLVQLARATDTYFSMGNKFRNPTVAPTHDVTTDRRQRLMLRFVPVDREDHTYSYKVRYTLAVGDNRVLDMASTFFDIRGVLDRGPSFKPYSGTAYNSLAPKGAPNTSQWIVTAGEERAVTTTTNTFGIASMKGDNITKEGLEIGKDITADNKPIYADKTYQPEPQVGEESWTDTDGTNEKFGGRALKPATKMKPCYGSFARPTNIKGGQAKNRKVKPTEGDVETEEPDIDMEFFDGREARDAFSPEIVLYTENVNLETPDSHVVYKPGTSDDNSHANLGQQAMPNRPNYIGFRDNFVGLMYYNSTGNMGVLAGQASQLNAVVDLQDRNTELSYQLLLDSLGDRTRYFSMWNQAVDSYDPDVRIIENHGIEDELPNYCFPLDGIGPAKTYQGIKSKDNGWEKDDNVSKSNEIAIGNNQAMEINIQANLWRSFLYSNVALYLPDVYKYTPTNITLPANTNTYEYMNGRVVSPSLVDSYINIGARWSLDPMDNVNPFNHHRNAGLRYRSMLLGNGRYVPFHIQVPQKFFAVKNLLLLPGSYTYEWNFRKDVNMVLQSSLGNDLRTDGASISFTSINLYATFFPMAHNTASTLEAMLRNDTNDQSFNDYLSAANMLYPIPANATNIPISIPSRNWAAFRGWSFTRLKTKETPSLGSGFDPYFVYSGSIPYLDGTFYLNHTFKKVSIMFDSSVSWPGNDRLLSPNEFEIKRTVDGEGYNVAQCNMTKDWFLVQMLANYNIGYQGFYIPEGYKDRMYSFFRNFQPMSRQVVDEVNYTDYKAVTLPYQHNNSGFVGYLAPTMRQGEPYPANYPYPLIGTTAVKSVTQKKFLCDRTMWRIPFSSNFMSMGALTDLGQNMLYANSAHALDMTFEVDPMDEPTLLYLLFEVFDVVRVHQPHRGVIEAVYLRTPFSAGNATT.

Ala2 is modified (N-acetylalanine; by host). Disordered regions lie at residues 190–210 (PQVG…FGGR) and 224–251 (SFAR…VETE). A Phosphotyrosine; by host modification is found at Tyr925.

It belongs to the adenoviridae hexon protein family. In terms of assembly, homotrimer. Interacts with the capsid vertex protein; this interaction binds the peripentonal hexons to the neighboring penton base. Interacts with the hexon-linking protein; this interaction tethers the hexons surrounding the penton to those situated in the central plate of the facet. Interacts with the hexon-interlacing protein; this interaction lashes the hexons together. Interacts with host dyneins DYNC1LI1 and DYNC1I2; this interaction might be involved in intracellular microtubule-dependent transport of incoming viral capsid. Interacts with the shutoff protein; this interaction allows folding and formation of hexons trimers. Interacts with pre-protein VI; this interaction probably allows nuclear import of hexon trimers and possibly pre-capsid assembly.

It localises to the virion. The protein resides in the host nucleus. In terms of biological role, major capsid protein that self-associates to form 240 hexon trimers, each in the shape of a hexagon, building most of the pseudo T=25 capsid. Assembled into trimeric units with the help of the chaperone shutoff protein. Transported by pre-protein VI to the nucleus where it associates with other structural proteins to form an empty capsid. Might be involved, through its interaction with host dyneins, in the intracellular microtubule-dependent transport of incoming viral capsid to the nucleus. The protein is Hexon protein of Homo sapiens (Human).